The primary structure comprises 113 residues: Ribulose bisphosphate carboxylase small subunit (113 aa).

This sequence belongs to the RuBisCO small chain family. Heterohexadecamer of 8 large and 8 small subunits. Forms a CsoS2-CsoS1-RuBisCO complex.

It is found in the carboxysome. Functionally, ruBisCO catalyzes two reactions: the carboxylation of D-ribulose 1,5-bisphosphate, the primary event in carbon dioxide fixation, as well as the oxidative fragmentation of the pentose substrate in the photorespiration process. Both reactions occur simultaneously and in competition at the same active site. Although the small subunit is not catalytic it is essential for maximal activity. There are estimated to be 152 RuBisCO holoenzymes per carboxysome. The polypeptide is Ribulose bisphosphate carboxylase small subunit (Prochlorococcus marinus subsp. pastoris (strain CCMP1986 / NIES-2087 / MED4)).